Here is a 109-residue protein sequence, read N- to C-terminus: Iron-sulfur cluster assembly protein CyaY (109 aa).

This sequence belongs to the frataxin family.

Functionally, involved in iron-sulfur (Fe-S) cluster assembly. May act as a regulator of Fe-S biogenesis. The sequence is that of Iron-sulfur cluster assembly protein CyaY from Shewanella baltica (strain OS155 / ATCC BAA-1091).